A 433-amino-acid chain; its full sequence is tRNA-2-methylthio-N(6)-dimethylallyladenosine synthase (433 aa).

Positions lysine 4–phenylalanine 119 constitute an MTTase N-terminal domain. Residues cysteine 13, cysteine 50, cysteine 82, cysteine 151, cysteine 155, and cysteine 158 each contribute to the [4Fe-4S] cluster site. A Radical SAM core domain is found at arginine 137 to glutamate 370. The TRAM domain occupies lysine 373–isoleucine 433.

Belongs to the methylthiotransferase family. MiaB subfamily. In terms of assembly, monomer. [4Fe-4S] cluster is required as a cofactor.

Its subcellular location is the cytoplasm. It catalyses the reaction N(6)-dimethylallyladenosine(37) in tRNA + (sulfur carrier)-SH + AH2 + 2 S-adenosyl-L-methionine = 2-methylsulfanyl-N(6)-dimethylallyladenosine(37) in tRNA + (sulfur carrier)-H + 5'-deoxyadenosine + L-methionine + A + S-adenosyl-L-homocysteine + 2 H(+). Functionally, catalyzes the methylthiolation of N6-(dimethylallyl)adenosine (i(6)A), leading to the formation of 2-methylthio-N6-(dimethylallyl)adenosine (ms(2)i(6)A) at position 37 in tRNAs that read codons beginning with uridine. The protein is tRNA-2-methylthio-N(6)-dimethylallyladenosine synthase of Campylobacter jejuni subsp. doylei (strain ATCC BAA-1458 / RM4099 / 269.97).